The sequence spans 292 residues: ATP synthase subunit a (292 aa).

The next 6 membrane-spanning stretches (helical) occupy residues 37–57 (IDSV…FWLC), 96–116 (FIAP…AMDM), 144–164 (VVPT…LVLC), 192–212 (PVFA…EYVA), 230–250 (LVFM…SGVL), and 263–283 (AIFH…LALI).

The protein belongs to the ATPase A chain family. In terms of assembly, F-type ATPases have 2 components, CF(1) - the catalytic core - and CF(0) - the membrane proton channel. CF(1) has five subunits: alpha(3), beta(3), gamma(1), delta(1), epsilon(1). CF(0) has three main subunits: a(1), b(2) and c(9-12). The alpha and beta chains form an alternating ring which encloses part of the gamma chain. CF(1) is attached to CF(0) by a central stalk formed by the gamma and epsilon chains, while a peripheral stalk is formed by the delta and b chains.

Its subcellular location is the cell inner membrane. In terms of biological role, key component of the proton channel; it plays a direct role in the translocation of protons across the membrane. This is ATP synthase subunit a from Paracidovorax citrulli (strain AAC00-1) (Acidovorax citrulli).